Here is a 156-residue protein sequence, read N- to C-terminus: Large ribosomal subunit protein uL15 (156 aa).

The span at 1–11 shows a compositional bias: basic and acidic residues; it reads MKLNDLRDKPG. A disordered region spans residues 1–40; that stretch reads MKLNDLRDKPGSVKARKRVGRGIGSGTGKTGGRGVKGQKS. Residues 21–35 are compositionally biased toward gly residues; it reads RGIGSGTGKTGGRGV.

This sequence belongs to the universal ribosomal protein uL15 family. Part of the 50S ribosomal subunit.

Functionally, binds to the 23S rRNA. The protein is Large ribosomal subunit protein uL15 of Brucella anthropi (strain ATCC 49188 / DSM 6882 / CCUG 24695 / JCM 21032 / LMG 3331 / NBRC 15819 / NCTC 12168 / Alc 37) (Ochrobactrum anthropi).